The sequence spans 499 residues: uncharacterized protein (499 aa).

2 disordered regions span residues 76–118 (QATA…RLSP) and 208–268 (DFET…DWAN). A compositionally biased stretch (basic and acidic residues) spans 87–104 (DPEKQTGKSRYHPSEEIR). Acidic residues predominate over residues 208-263 (DFETEDDESGDDDSEDTGEDEDEEEWVAILEDEDEDDDDDDDDDEDDDDSDSDESL). S355 is subject to Phosphoserine. The segment at 478–499 (AEGQIRKLLFPKTNQSTQPKPK) is disordered. Polar residues predominate over residues 489–499 (KTNQSTQPKPK).

This is an uncharacterized protein from Arabidopsis thaliana (Mouse-ear cress).